The following is a 263-amino-acid chain: uncharacterized protein (263 aa).

Belongs to the flavoredoxin family. FMN serves as cofactor.

This is an uncharacterized protein from Aeropyrum pernix (strain ATCC 700893 / DSM 11879 / JCM 9820 / NBRC 100138 / K1).